The sequence spans 59 residues: Large ribosomal subunit protein uL30 (59 aa).

It belongs to the universal ribosomal protein uL30 family. Part of the 50S ribosomal subunit.

This chain is Large ribosomal subunit protein uL30, found in Macrococcus caseolyticus (strain JCSC5402) (Macrococcoides caseolyticum).